A 219-amino-acid chain; its full sequence is Swarming motility regulation protein RssB (219 aa).

Positions 2–116 (NILLVEDDLQ…ELISRVKAVN (115 aa)) constitute a Response regulatory domain. D51 is modified (4-aspartylphosphate). A DNA-binding region (ompR/PhoB-type) is located at residues 124 to 218 (SQTWSLGALY…VRGIGYLLKK (95 aa)).

The protein localises to the cytoplasm. Member of the two-component regulatory system RssA/RssB involved in regulation of swarming motility which has been shown to be inhibited by saturated fatty acids. RssA/RssB regulates cellular fatty acid composition, hemolysin production and cell surface topography. RssA/RssB negatively regulates the activity of SlhBA. It can also act as a negative regulator for the control of the swarming initiation. RssB binds its own promoter. This is Swarming motility regulation protein RssB (rssB) from Serratia marcescens.